The following is a 22-amino-acid chain: Mu-conotoxin SxIIIC (22 aa).

3 disulfide bridges follow: C3/C15, C4/C21, and C10/C22. C22 bears the Cysteine amide mark.

This sequence belongs to the conotoxin M superfamily. In terms of tissue distribution, expressed by the venom duct.

The protein localises to the secreted. In terms of biological role, mu-conotoxins block voltage-gated sodium channels (Nav). This toxin potently inhibits hNav1.4/SCN4A (IC(50)=15.11 nM). It also displays lower activities on other human subtypes (Nav1.1/SCN1A; IC(50)=132 nM, Nav1.2/SCN2A; IC(50)=363.8, Nav1.3/SCN3A; IC(50)=89.4, Nav1.6/SCN3A; IC(50)=124.9, Nav1.7/SCN7A; IC(50)=152.2). At Nav1.7/SCN9A, it does not elicit change in channel voltage-dependence of fast inactivation or activation, suggesting it acts as a pore blocker. Interestingly, it blocks current inhibition in an irreversible manner (tested during 35 minutes). In Conus striolatus (Cone snail), this protein is Mu-conotoxin SxIIIC.